Consider the following 731-residue polypeptide: Inclusion body clearance protein IML2 (731 aa).

The interval 1 to 26 (MFRVFGSFGSKGNQSSGEEQSTKTKQ) is disordered. A compositionally biased stretch (polar residues) spans 10-26 (SKGNQSSGEEQSTKTKQ). Phosphoserine is present on residues Ser265, Ser268, and Ser378. Thr380 carries the post-translational modification Phosphothreonine. Ser383 and Ser392 each carry phosphoserine.

The protein belongs to the IML2 family. In terms of assembly, interacts with lipid droplet proteins PET10 and PDR16.

The protein resides in the cytoplasm. The protein localises to the nucleus. In terms of biological role, inclusion body (IB) resident protein that interacts strongly with lipid droplet (LD) proteins. Involved in LD-mediated IB clearing after protein folding stress, probably by enabling access to the IBs of an LD-stored soluble sterol derivative that acts as a chaperone in inclusion clearing. This Saccharomyces cerevisiae (strain ATCC 204508 / S288c) (Baker's yeast) protein is Inclusion body clearance protein IML2.